Consider the following 373-residue polypeptide: mRNA-decapping enzyme subunit 2 (373 aa).

One can recognise a Nudix hydrolase domain in the interval Cys-106–Met-234. The Nudix box motif lies at Gly-139–Gly-160. Mg(2+) is bound by residues Glu-154 and Glu-158. ATP-binding residues include Arg-178 and Tyr-233. The interval Tyr-233 to Pro-250 is RNA binding. The segment at Gly-275–Asp-342 is disordered. The segment covering Asn-298–Met-323 has biased composition (basic and acidic residues). Polar residues predominate over residues Glu-324–Ser-334. Residues Gly-370–Ala-373 carry the PDZ-binding motif.

The protein belongs to the Nudix hydrolase family. DCP2 subfamily. In terms of assembly, homodimer. Catalytic component of the decapping complex. Interacts with DCP1, DCP5 and VCS. Requires Mn(2+) as cofactor. It depends on Mg(2+) as a cofactor. Expressed in seedlings, mostly in root tips, root hairs, and the vascular system. Also present in roots, leaves, stems, and flowers.

The protein localises to the cytoplasm. Its subcellular location is the P-body. The catalysed reaction is a 5'-end (N(7)-methyl 5'-triphosphoguanosine)-ribonucleoside in mRNA + H2O = N(7)-methyl-GDP + a 5'-end phospho-ribonucleoside in mRNA + 2 H(+). With respect to regulation, inhibited by the product 7-methyl GDP. In terms of biological role, catalytic component of the decapping complex necessary for the degradation of mRNAs, both in normal mRNA turnover and in nonsense-mediated mRNA decay. Removes the 7-methyl guanine cap structure from mRNA molecules, yielding a 5'-phosphorylated mRNA fragment and 7m-GDP. Essential for postembryonic development, especially during the formation of the shoot apical meristem (SAM). This chain is mRNA-decapping enzyme subunit 2 (DCP2), found in Arabidopsis thaliana (Mouse-ear cress).